The following is a 185-amino-acid chain: Potassium-transporting ATPase KdpC subunit (185 aa).

Residues 14 to 34 (ALSLLTGVAYPLALTGIAAVI) traverse the membrane as a helical segment.

The protein belongs to the KdpC family. In terms of assembly, the system is composed of three essential subunits: KdpA, KdpB and KdpC.

Its subcellular location is the cell inner membrane. Functionally, part of the high-affinity ATP-driven potassium transport (or Kdp) system, which catalyzes the hydrolysis of ATP coupled with the electrogenic transport of potassium into the cytoplasm. This subunit acts as a catalytic chaperone that increases the ATP-binding affinity of the ATP-hydrolyzing subunit KdpB by the formation of a transient KdpB/KdpC/ATP ternary complex. This chain is Potassium-transporting ATPase KdpC subunit, found in Cereibacter sphaeroides (strain ATCC 17023 / DSM 158 / JCM 6121 / CCUG 31486 / LMG 2827 / NBRC 12203 / NCIMB 8253 / ATH 2.4.1.) (Rhodobacter sphaeroides).